Reading from the N-terminus, the 108-residue chain is Urease subunit beta (108 aa).

This sequence belongs to the urease beta subunit family. In terms of assembly, heterotrimer of UreA (gamma), UreB (beta) and UreC (alpha) subunits. Three heterotrimers associate to form the active enzyme.

It is found in the cytoplasm. It catalyses the reaction urea + 2 H2O + H(+) = hydrogencarbonate + 2 NH4(+). Its pathway is nitrogen metabolism; urea degradation; CO(2) and NH(3) from urea (urease route): step 1/1. The polypeptide is Urease subunit beta (Trichormus variabilis (strain ATCC 29413 / PCC 7937) (Anabaena variabilis)).